The primary structure comprises 160 residues: MSDETATPGADQAPLIINGQYIKDLSFEVPNAPRIFAELDGQPEVPINVDVTATPVGERFFEVSLKFRIEGRIKGKVAFIAELDYCAVATVNLPDEHIHPVLLIEVPRLMFPFARNILADLTRDGGFLPLMIQPLDFAAMYRNRVQAAQSQAAAENAAAN.

Belongs to the SecB family. Homotetramer, a dimer of dimers. One homotetramer interacts with 1 SecA dimer.

The protein localises to the cytoplasm. Functionally, one of the proteins required for the normal export of preproteins out of the cell cytoplasm. It is a molecular chaperone that binds to a subset of precursor proteins, maintaining them in a translocation-competent state. It also specifically binds to its receptor SecA. This Rhodospirillum rubrum (strain ATCC 11170 / ATH 1.1.1 / DSM 467 / LMG 4362 / NCIMB 8255 / S1) protein is Protein-export protein SecB.